The chain runs to 132 residues: Matrix protein (132 aa).

Its subcellular location is the virion membrane. Functionally, envelope protein that may play a role in host-cell attachment and viral genome entry. In Halorubrum pleomorphic virus 1 (HRPV-1), this protein is Matrix protein.